Consider the following 320-residue polypeptide: MSTFETLIKRGGNEAIKINPPTGADFHITSRGSDWFWTCFCCYLLFGLILTFLMFRKPVNDRFFYLTGIAPNFFMCIAYFTMASNLGWIPVKAKYNHVQTSTQKEHPGYRQIFYSRFVGWFLALPWPIIQICMLAGTPFWQMAFNVCITEFFTVCWLIAACVHSTYKWGYYTIGLGAAIVVSISVMTTSYNLVKQRDNDIRLTFLVFFSIIMFLWIIAYPTCFGITDGGNVLQPDSAGIFYGIIDLILMCFIPTLLVPIANHFGADKLGYHFGPSDAEAVMAPKAPVASPRPAATPNLSKDKKKKSKKSKKSKKSKKSEE.

Residues 1 to 34 are Extracellular-facing; sequence MSTFETLIKRGGNEAIKINPPTGADFHITSRGSD. Residues 35–55 form a helical membrane-spanning segment; that stretch reads WFWTCFCCYLLFGLILTFLMF. Residues 56 to 62 lie on the Cytoplasmic side of the membrane; it reads RKPVNDR. The helical transmembrane segment at 63–83 threads the bilayer; that stretch reads FFYLTGIAPNFFMCIAYFTMA. Over 84 to 116 the chain is Extracellular; the sequence is SNLGWIPVKAKYNHVQTSTQKEHPGYRQIFYSR. Residues 117–137 traverse the membrane as a helical segment; the sequence is FVGWFLALPWPIIQICMLAGT. Topologically, residues 138 to 141 are cytoplasmic; the sequence is PFWQ. The helical transmembrane segment at 142–162 threads the bilayer; sequence MAFNVCITEFFTVCWLIAACV. The Extracellular portion of the chain corresponds to 163–167; it reads HSTYK. The helical transmembrane segment at 168 to 188 threads the bilayer; it reads WGYYTIGLGAAIVVSISVMTT. The Cytoplasmic segment spans residues 189-204; the sequence is SYNLVKQRDNDIRLTF. The helical transmembrane segment at 205–225 threads the bilayer; that stretch reads LVFFSIIMFLWIIAYPTCFGI. The Extracellular portion of the chain corresponds to 226–238; it reads TDGGNVLQPDSAG. A helical transmembrane segment spans residues 239 to 259; sequence IFYGIIDLILMCFIPTLLVPI. The Cytoplasmic portion of the chain corresponds to 260–320; it reads ANHFGADKLG…KSKKSKKSEE (61 aa). The disordered stretch occupies residues 285–320; the sequence is APVASPRPAATPNLSKDKKKKSKKSKKSKKSKKSEE. S289 carries the post-translational modification Phosphoserine. Phosphothreonine is present on T295. S299 is subject to Phosphoserine. A compositionally biased stretch (basic residues) spans 301 to 320; it reads DKKKKSKKSKKSKKSKKSEE.

It belongs to the archaeal/bacterial/fungal opsin family.

It is found in the cell membrane. Its subcellular location is the mitochondrion. The protein localises to the bud. This Saccharomyces cerevisiae (strain ATCC 204508 / S288c) (Baker's yeast) protein is Protein MRH1 (MRH1).